A 1153-amino-acid polypeptide reads, in one-letter code: PPi-type phosphoenolpyruvate carboxykinase 3 (1153 aa).

Residues 1085-1131 adopt a coiled-coil conformation; that stretch reads RQKLEVAKLNKDLAYLNKTIAEKPRLAETLNKQIAAVKEELQYVSSE.

It belongs to the PPi-type phosphoenolpyruvate carboxykinase family. In terms of assembly, monomer and trimer; forms heterotrimers with PEPCK1 and PEPCK2.

It localises to the cytoplasm. The protein resides in the cytosol. It catalyses the reaction oxaloacetate + diphosphate = phosphoenolpyruvate + phosphate + CO2. In terms of biological role, inorganic pyrophosphate (PPi)-dependent phosphoenolpyruvate carboxykinase, which regulates the carbon flow of the central metabolism by fixing CO(2) to phosphoenolpyruvate to produce oxaloacetate. Can also produce pyruvate and diphosphate from phosphoenolpyruvate and phosphate. The chain is PPi-type phosphoenolpyruvate carboxykinase 3 from Entamoeba histolytica (strain ATCC 30459 / HM-1:IMSS / ABRM).